The sequence spans 440 residues: Glucose-1-phosphate adenylyltransferase (440 aa).

Alpha-D-glucose 1-phosphate-binding positions include Tyr-125, Gly-190, 205–206 (EK), and Ser-223.

It belongs to the bacterial/plant glucose-1-phosphate adenylyltransferase family. As to quaternary structure, homotetramer.

It carries out the reaction alpha-D-glucose 1-phosphate + ATP + H(+) = ADP-alpha-D-glucose + diphosphate. The protein operates within glycan biosynthesis; glycogen biosynthesis. Its function is as follows. Involved in the biosynthesis of ADP-glucose, a building block required for the elongation reactions to produce glycogen. Catalyzes the reaction between ATP and alpha-D-glucose 1-phosphate (G1P) to produce pyrophosphate and ADP-Glc. This is Glucose-1-phosphate adenylyltransferase from Dechloromonas aromatica (strain RCB).